A 370-amino-acid polypeptide reads, in one-letter code: Putative agmatine deiminase (370 aa).

C361 acts as the Amidino-cysteine intermediate in catalysis.

The protein belongs to the agmatine deiminase family.

The enzyme catalyses agmatine + H2O = N-carbamoylputrescine + NH4(+). This Shewanella baltica (strain OS185) protein is Putative agmatine deiminase.